Here is a 311-residue protein sequence, read N- to C-terminus: Aspartate carbamoyltransferase catalytic subunit (311 aa).

Carbamoyl phosphate contacts are provided by Arg58 and Thr59. L-aspartate is bound at residue Lys86. Positions 108, 136, and 139 each coordinate carbamoyl phosphate. L-aspartate-binding residues include Arg169 and Arg223. Carbamoyl phosphate is bound by residues Gly264 and Pro265.

This sequence belongs to the aspartate/ornithine carbamoyltransferase superfamily. ATCase family. As to quaternary structure, heterododecamer (2C3:3R2) of six catalytic PyrB chains organized as two trimers (C3), and six regulatory PyrI chains organized as three dimers (R2).

It catalyses the reaction carbamoyl phosphate + L-aspartate = N-carbamoyl-L-aspartate + phosphate + H(+). It functions in the pathway pyrimidine metabolism; UMP biosynthesis via de novo pathway; (S)-dihydroorotate from bicarbonate: step 2/3. In terms of biological role, catalyzes the condensation of carbamoyl phosphate and aspartate to form carbamoyl aspartate and inorganic phosphate, the committed step in the de novo pyrimidine nucleotide biosynthesis pathway. The chain is Aspartate carbamoyltransferase catalytic subunit from Acidiphilium cryptum (strain JF-5).